Reading from the N-terminus, the 349-residue chain is UDP-3-O-acylglucosamine N-acyltransferase (349 aa).

H240 (proton acceptor) is an active-site residue.

Belongs to the transferase hexapeptide repeat family. LpxD subfamily. As to quaternary structure, homotrimer.

The catalysed reaction is a UDP-3-O-[(3R)-3-hydroxyacyl]-alpha-D-glucosamine + a (3R)-hydroxyacyl-[ACP] = a UDP-2-N,3-O-bis[(3R)-3-hydroxyacyl]-alpha-D-glucosamine + holo-[ACP] + H(+). It functions in the pathway bacterial outer membrane biogenesis; LPS lipid A biosynthesis. Functionally, catalyzes the N-acylation of UDP-3-O-acylglucosamine using 3-hydroxyacyl-ACP as the acyl donor. Is involved in the biosynthesis of lipid A, a phosphorylated glycolipid that anchors the lipopolysaccharide to the outer membrane of the cell. In Porphyromonas gingivalis (strain ATCC BAA-308 / W83), this protein is UDP-3-O-acylglucosamine N-acyltransferase.